The primary structure comprises 267 residues: 2-keto-3-deoxy-L-rhamnonate aldolase (267 aa).

The Proton acceptor role is filled by H49. Residue Q151 coordinates substrate. E153 provides a ligand contact to Mg(2+). Substrate contacts are provided by A178 and D179. Residue D179 participates in Mg(2+) binding.

The protein belongs to the HpcH/HpaI aldolase family. KDR aldolase subfamily. In terms of assembly, homohexamer. It depends on Mg(2+) as a cofactor.

The enzyme catalyses 2-dehydro-3-deoxy-L-rhamnonate = (S)-lactaldehyde + pyruvate. Catalyzes the reversible retro-aldol cleavage of 2-keto-3-deoxy-L-rhamnonate (KDR) to pyruvate and lactaldehyde. The protein is 2-keto-3-deoxy-L-rhamnonate aldolase of Salmonella paratyphi A (strain ATCC 9150 / SARB42).